We begin with the raw amino-acid sequence, 223 residues long: Phage shock protein A homolog (223 aa).

A coiled-coil region spans residues 29–185; that stretch reads IDQALRDMRS…AGMEDRNKAM (157 aa).

The protein belongs to the PspA/Vipp/IM30 family.

The sequence is that of Phage shock protein A homolog from Deinococcus radiodurans (strain ATCC 13939 / DSM 20539 / JCM 16871 / CCUG 27074 / LMG 4051 / NBRC 15346 / NCIMB 9279 / VKM B-1422 / R1).